Consider the following 396-residue polypeptide: MAAEPPALRLRPPGSTGDSPPVPRLLGGCVPLSHQVAGHMYGKDKVGILQHPDGTVLKQLQPPPRGPRELEFYTMVYAADCADAVLLELRKHLPKYYGVWSPPTAPNDVYLKLEDVTHKFNKPCIMDVKIGRKSYDPFASSEKIQQQVSKYPLMEEIGFLVLGMRVYHLHSDSYETQNQHYGRGLTKETLKEGVSKFFHNGFCLRKDAIAASIQKVEKILQWFENQKQLNFYASSLLFVYEGSSQPATTKANDRTLAGRFLSKGPLTDADGLECNNNFHLFGAPPNGMSVGKSLSKAYSRHRKLYAKKHQSQTSLKVETLEQDNGWRSMSQEHLNGNVLAQLEKVFYHLPAGRPEIPEAEVRMIDFAHVFPSNTVDEGYVYGLKHLIAVLRSILDS.

Residues 1 to 13 are compositionally biased toward low complexity; that stretch reads MAAEPPALRLRPP. Positions 1–22 are disordered; the sequence is MAAEPPALRLRPPGSTGDSPPV. An N-acetylalanine modification is found at Ala2. Ser19 is subject to Phosphoserine. Lys58 contributes to the ATP binding site. Arg65 contacts substrate. ATP-binding positions include 114–116 and Asp127; that span reads EDV. Substrate contacts are provided by residues Lys129, 143–150, and Gln179; that span reads KIQQQVSK. The Nuclear localization signal motif lies at 300-310; the sequence is RHRKLYAKKHQ. Position 365 (Asp365) interacts with ATP.

It belongs to the inositol phosphokinase (IPK) family. Mg(2+) serves as cofactor.

The protein resides in the nucleus. The catalysed reaction is 1D-myo-inositol 1,4,5-trisphosphate + 2 ATP = 1D-myo-inositol 1,3,4,5,6-pentakisphosphate + 2 ADP + 2 H(+). It catalyses the reaction 1D-myo-inositol 1,3,4,6-tetrakisphosphate + ATP = 1D-myo-inositol 1,3,4,5,6-pentakisphosphate + ADP + H(+). The enzyme catalyses 1-octadecanoyl-2-(5Z,8Z,11Z,14Z)-eicosatetraenoyl-sn-glycero-3-phospho-1D-myo-inositol 4,5-bisphosphate + ATP = 1-octadecanoyl-2-(5Z,8Z,11Z,14Z-eicosatetraenoyl)-sn-glycero-3-phospho-(1D-myo-inositol 3,4,5-triphosphate) + ADP + H(+). It carries out the reaction a 1,2-diacyl-sn-glycero-3-phospho-(1D-myo-inositol-4,5-bisphosphate) + ATP = a 1,2-diacyl-sn-glycero-3-phospho-(1D-myo-inositol-3,4,5-trisphosphate) + ADP + H(+). The catalysed reaction is 1D-myo-inositol 1,4,5,6-tetrakisphosphate + ATP = 1D-myo-inositol 1,3,4,5,6-pentakisphosphate + ADP + H(+). It participates in phospholipid metabolism; phosphatidylinositol metabolism. Inositol phosphate kinase with a broad substrate specificity. Phosphorylates inositol 1,4,5-trisphosphate (Ins(1,4,5)P3) first to inositol 1,3,4,5-tetrakisphosphate and then to inositol 1,3,4,5,6-pentakisphosphate (Ins(1,3,4,5,6)P5). Phosphorylates inositol 1,3,4,6-tetrakisphosphate (Ins(1,3,4,6)P4). Phosphorylates inositol 1,4,5,6-tetrakisphosphate (Ins(1,4,5,6)P4). Phosphorylates glycero-3-phospho-1D-myo-inositol 4,5-bisphosphate to glycero-3-phospho-1D-myo-inositol 3,4,5-trisphosphate. Plays an important role in MLKL-mediated necroptosis via its role in the biosynthesis of inositol pentakisphosphate (InsP5) and inositol hexakisphosphate (InsP6). Binding of these highly phosphorylated inositol phosphates to MLKL mediates the release of an N-terminal auto-inhibitory region, leading to activation of the kinase. Essential for activated phospho-MLKL to oligomerize and localize to the cell membrane during necroptosis. Required for normal embryonic development, probably via its role in the biosynthesis of inositol 1,3,4,5,6-pentakisphosphate (Ins(1,3,4,5,6)P5) and inositol hexakisphosphate (InsP6). The chain is Inositol polyphosphate multikinase (Ipmk) from Mus musculus (Mouse).